An 895-amino-acid chain; its full sequence is DNA mismatch repair protein MutS (895 aa).

ATP is bound at residue 632–639 (GPNMAGKS). The segment at 824–849 (VTQDKKQVKKQTKNNHSARSGSRQQQ) is disordered. Residues 837 to 849 (NNHSARSGSRQQQ) are compositionally biased toward polar residues.

This sequence belongs to the DNA mismatch repair MutS family.

In terms of biological role, this protein is involved in the repair of mismatches in DNA. It is possible that it carries out the mismatch recognition step. This protein has a weak ATPase activity. This Desulforapulum autotrophicum (strain ATCC 43914 / DSM 3382 / VKM B-1955 / HRM2) (Desulfobacterium autotrophicum) protein is DNA mismatch repair protein MutS.